The primary structure comprises 511 residues: MDIRPSEISKILKEQIRDFDQKAEVSEIGWVLSVGDGIARVYGLDNIQAGEMVSFSNGVHGMALNLEIDNVGVVIFGSDRDIREGDSVKRLGAIVDVPVGPALLGRVVDALGNPIDGKGPLKATERRRVDVKAPGIIPRQSVHEPMPTGLKAIDALIPIGRGQRELVIGDRQTGKTAILLDTFLNQKPFHEKGAGNEQDKVYCIYVAIGQKRSTVAQFVKVLEERGALEYSIIVAATASDPAPMQFIAPLAGCAMGEYFRDNGQHALIGYDDLSKQAVAYRQMSLLLRRPPGREAYPGDVFYLHSRLLERAAKLNAENGSGSLTALPVIETQANDVSAYIPTNVISITDGQIFLETNLFYQGIRPAVNVGLSVSRVGSAAQIKAMKQVAGSIKGELAQYREMAAFAQFGSDLDASTQRLLNRGARLTELLKQPQFSPLKTEEQVVVIFAGVNGYLDALAVSDVGRFEQGLLTLLRSDHPDLLQAIAHQKQITDDVKDKLIVVLNTYAKIFS.

169-176 provides a ligand contact to ATP; sequence GDRQTGKT.

Belongs to the ATPase alpha/beta chains family. As to quaternary structure, F-type ATPases have 2 components, CF(1) - the catalytic core - and CF(0) - the membrane proton channel. CF(1) has five subunits: alpha(3), beta(3), gamma(1), delta(1), epsilon(1). CF(0) has three main subunits: a(1), b(2) and c(9-12). The alpha and beta chains form an alternating ring which encloses part of the gamma chain. CF(1) is attached to CF(0) by a central stalk formed by the gamma and epsilon chains, while a peripheral stalk is formed by the delta and b chains.

Its subcellular location is the cell inner membrane. The enzyme catalyses ATP + H2O + 4 H(+)(in) = ADP + phosphate + 5 H(+)(out). Produces ATP from ADP in the presence of a proton gradient across the membrane. The alpha chain is a regulatory subunit. The sequence is that of ATP synthase subunit alpha from Bartonella quintana (strain Toulouse) (Rochalimaea quintana).